The primary structure comprises 365 residues: S-type anion channel SLAH4 (365 aa).

Residues 1-25 (MEIPSQEIHIMIDNTISRRKERKTN) lie on the Cytoplasmic side of the membrane. Residues 26–46 (LADAEPIVLMSVLSSLHAGYF) traverse the membrane as a helical segment. Residues 47–73 (RISLSLCSQALLWKIMVHLHSELPSMA) lie on the Extracellular side of the membrane. The chain crosses the membrane as a helical span at residues 74-94 (YYLLWYLALATQVSLCFLYAF). At 95–106 (KCIFLFDMVKEE) the chain is on the cytoplasmic side. The chain crosses the membrane as a helical span at residues 107-127 (FSHYIGVNYLYAPSISCLLLL). Topologically, residues 128 to 131 (QSAP) are extracellular. A helical membrane pass occupies residues 132 to 152 (MIEPHSVLYQTLFWIFAVPVL). Residues 153–168 (TLDTKLYGQWFTTEKR) lie on the Cytoplasmic side of the membrane. A helical transmembrane segment spans residues 169-189 (FLSIMANPASQVSVIANLVAA). The Extracellular segment spans residues 190–199 (RGAAEMGWKE). Residues 200–220 (CALCLFSLGMVHYLVIFVTLY) traverse the membrane as a helical segment. At 221 to 235 (QRLPGGNNFPTTLRP) the chain is on the cytoplasmic side. A helical membrane pass occupies residues 236–256 (VFFLFFAAPATASLAWNSICG). Position 257 (N257) is a topological domain, extracellular. The chain crosses the membrane as a helical span at residues 258–278 (FDTIAKMLFFLSLFIFISLVC). At 279-291 (RPNLLKKSIKRFN) the chain is on the cytoplasmic side. The helical transmembrane segment at 292-312 (VAWWAYSFPITFLALNSVQYA) threads the bilayer. At 313–321 (QEVKDHVAS) the chain is on the extracellular side. A helical membrane pass occupies residues 322 to 342 (VLMFIFSSMSVLIFISVMLLT). At 343 to 365 (AANSKRLLRRDHVLWSSTGPKDK) the chain is on the cytoplasmic side.

Belongs to the SLAC1 S-type anion channel family. Homotrimer.

The protein localises to the cell membrane. Functionally, slow, weak voltage-dependent S-type anion efflux channel involved in maintenance of anion homeostasis. The polypeptide is S-type anion channel SLAH4 (SLAH4) (Arabidopsis thaliana (Mouse-ear cress)).